Here is a 286-residue protein sequence, read N- to C-terminus: Pyridoxal kinase PdxY (286 aa).

Ser8 contributes to the substrate binding site. ATP-binding residues include Asp110 and Glu147. Asp223 serves as a coordination point for substrate.

It belongs to the pyridoxine kinase family. PdxY subfamily. In terms of assembly, homodimer. It depends on Mg(2+) as a cofactor.

It catalyses the reaction pyridoxal + ATP = pyridoxal 5'-phosphate + ADP + H(+). It participates in cofactor metabolism; pyridoxal 5'-phosphate salvage; pyridoxal 5'-phosphate from pyridoxal: step 1/1. Its function is as follows. Pyridoxal kinase involved in the salvage pathway of pyridoxal 5'-phosphate (PLP). Catalyzes the phosphorylation of pyridoxal to PLP. The chain is Pyridoxal kinase PdxY from Granulibacter bethesdensis (strain ATCC BAA-1260 / CGDNIH1).